The chain runs to 78 residues: Large ribosomal subunit protein uL29 (78 aa).

Belongs to the universal ribosomal protein uL29 family.

The sequence is that of Large ribosomal subunit protein uL29 from Salinispora arenicola (strain CNS-205).